The primary structure comprises 215 residues: 7-methyl-GTP pyrophosphatase (215 aa).

The active-site Proton acceptor is the D79.

This sequence belongs to the Maf family. YceF subfamily. A divalent metal cation is required as a cofactor.

Its subcellular location is the cytoplasm. The enzyme catalyses N(7)-methyl-GTP + H2O = N(7)-methyl-GMP + diphosphate + H(+). In terms of biological role, nucleoside triphosphate pyrophosphatase that hydrolyzes 7-methyl-GTP (m(7)GTP). May have a dual role in cell division arrest and in preventing the incorporation of modified nucleotides into cellular nucleic acids. This Burkholderia mallei (strain ATCC 23344) protein is 7-methyl-GTP pyrophosphatase.